A 352-amino-acid polypeptide reads, in one-letter code: Peptide chain release factor 1 (352 aa).

Gln229 carries the N5-methylglutamine modification.

It belongs to the prokaryotic/mitochondrial release factor family. In terms of processing, methylated by PrmC. Methylation increases the termination efficiency of RF1.

It is found in the cytoplasm. Functionally, peptide chain release factor 1 directs the termination of translation in response to the peptide chain termination codons UAG and UAA. The sequence is that of Peptide chain release factor 1 from Granulibacter bethesdensis (strain ATCC BAA-1260 / CGDNIH1).